The primary structure comprises 478 residues: Kynureninase (478 aa).

Residues leucine 138, threonine 139, 166–169 (FPSD), aspartate 252, histidine 255, and tyrosine 277 each bind pyridoxal 5'-phosphate. The residue at position 278 (lysine 278) is an N6-(pyridoxal phosphate)lysine. Residues tryptophan 315 and asparagine 343 each coordinate pyridoxal 5'-phosphate.

This sequence belongs to the kynureninase family. In terms of assembly, homodimer. Pyridoxal 5'-phosphate is required as a cofactor.

Its subcellular location is the cytoplasm. It carries out the reaction L-kynurenine + H2O = anthranilate + L-alanine + H(+). The catalysed reaction is 3-hydroxy-L-kynurenine + H2O = 3-hydroxyanthranilate + L-alanine + H(+). Its pathway is amino-acid degradation; L-kynurenine degradation; L-alanine and anthranilate from L-kynurenine: step 1/1. It participates in cofactor biosynthesis; NAD(+) biosynthesis; quinolinate from L-kynurenine: step 2/3. In terms of biological role, catalyzes the cleavage of L-kynurenine (L-Kyn) and L-3-hydroxykynurenine (L-3OHKyn) into anthranilic acid (AA) and 3-hydroxyanthranilic acid (3-OHAA), respectively. The protein is Kynureninase of Coccidioides immitis (strain RS) (Valley fever fungus).